Here is a 1342-residue protein sequence, read N- to C-terminus: DNA-directed RNA polymerase subunit beta (1342 aa).

This sequence belongs to the RNA polymerase beta chain family. As to quaternary structure, the RNAP catalytic core consists of 2 alpha, 1 beta, 1 beta' and 1 omega subunit. When a sigma factor is associated with the core the holoenzyme is formed, which can initiate transcription.

It catalyses the reaction RNA(n) + a ribonucleoside 5'-triphosphate = RNA(n+1) + diphosphate. Functionally, DNA-dependent RNA polymerase catalyzes the transcription of DNA into RNA using the four ribonucleoside triphosphates as substrates. The sequence is that of DNA-directed RNA polymerase subunit beta from Vibrio vulnificus (strain CMCP6).